The following is a 255-amino-acid chain: Small ribosomal subunit protein eS1 (255 aa).

The span at 1 to 18 (MAVGKNKRLSKGKKGLKK) shows a compositional bias: basic residues. The interval 1-28 (MAVGKNKRLSKGKKGLKKRTQDPFSRKD) is disordered. Ala-2 carries the post-translational modification N-acetylalanine; partial. Positions 19–28 (RTQDPFSRKD) are enriched in basic and acidic residues.

The protein belongs to the eukaryotic ribosomal protein eS1 family. Component of the small ribosomal subunit. Mature ribosomes consist of a small (40S) and a large (60S) subunit. The 40S subunit contains about 33 different proteins and 1 molecule of RNA (18S). The 60S subunit contains about 49 different proteins and 3 molecules of RNA (25S, 5.8S and 5S).

The protein localises to the cytoplasm. This chain is Small ribosomal subunit protein eS1, found in Ajellomyces dermatitidis (strain ER-3 / ATCC MYA-2586) (Blastomyces dermatitidis).